The primary structure comprises 443 residues: UDP-N-acetylmuramate--L-alanine ligase (443 aa).

Residue 110–116 (GAHGKTS) participates in ATP binding.

Belongs to the MurCDEF family.

It is found in the cytoplasm. It carries out the reaction UDP-N-acetyl-alpha-D-muramate + L-alanine + ATP = UDP-N-acetyl-alpha-D-muramoyl-L-alanine + ADP + phosphate + H(+). It participates in cell wall biogenesis; peptidoglycan biosynthesis. Cell wall formation. The polypeptide is UDP-N-acetylmuramate--L-alanine ligase (Lactococcus lactis subsp. cremoris (strain MG1363)).